We begin with the raw amino-acid sequence, 219 residues long: Thiamine-phosphate synthase (219 aa).

4-amino-2-methyl-5-(diphosphooxymethyl)pyrimidine-binding positions include 48 to 52 (QFRQK) and N84. D85 and D104 together coordinate Mg(2+). A 4-amino-2-methyl-5-(diphosphooxymethyl)pyrimidine-binding site is contributed by S123. 150–152 (TPS) contacts 2-[(2R,5Z)-2-carboxy-4-methylthiazol-5(2H)-ylidene]ethyl phosphate. K153 is a binding site for 4-amino-2-methyl-5-(diphosphooxymethyl)pyrimidine. Residues G181 and 199–200 (IS) each bind 2-[(2R,5Z)-2-carboxy-4-methylthiazol-5(2H)-ylidene]ethyl phosphate.

It belongs to the thiamine-phosphate synthase family. Requires Mg(2+) as cofactor.

The enzyme catalyses 2-[(2R,5Z)-2-carboxy-4-methylthiazol-5(2H)-ylidene]ethyl phosphate + 4-amino-2-methyl-5-(diphosphooxymethyl)pyrimidine + 2 H(+) = thiamine phosphate + CO2 + diphosphate. It catalyses the reaction 2-(2-carboxy-4-methylthiazol-5-yl)ethyl phosphate + 4-amino-2-methyl-5-(diphosphooxymethyl)pyrimidine + 2 H(+) = thiamine phosphate + CO2 + diphosphate. The catalysed reaction is 4-methyl-5-(2-phosphooxyethyl)-thiazole + 4-amino-2-methyl-5-(diphosphooxymethyl)pyrimidine + H(+) = thiamine phosphate + diphosphate. It participates in cofactor biosynthesis; thiamine diphosphate biosynthesis; thiamine phosphate from 4-amino-2-methyl-5-diphosphomethylpyrimidine and 4-methyl-5-(2-phosphoethyl)-thiazole: step 1/1. Condenses 4-methyl-5-(beta-hydroxyethyl)thiazole monophosphate (THZ-P) and 2-methyl-4-amino-5-hydroxymethyl pyrimidine pyrophosphate (HMP-PP) to form thiamine monophosphate (TMP). In Helicobacter pylori (strain HPAG1), this protein is Thiamine-phosphate synthase.